The following is a 170-amino-acid chain: MSTLRIPIALQQAVMQCLRHYLQLANQHLGTAYPEPKINYHQRGTNAGSAYLQSFEIRLNPVLLLENKQPFIDEVVPHELAHLLVYRQFGRVAPHGKEWRWMMEQVLKVPASRTHQFEVASVRSKTFNYQCKCQQHALTIRRHNKVLRGESEYRCRQCGEKLQFITINPD.

The SprT-like domain maps to 22–165; the sequence is LQLANQHLGT…RQCGEKLQFI (144 aa). Histidine 78 provides a ligand contact to Zn(2+). The active site involves glutamate 79. Residue histidine 82 coordinates Zn(2+).

The protein belongs to the SprT family. Zn(2+) is required as a cofactor.

The protein resides in the cytoplasm. In Yersinia pseudotuberculosis serotype O:1b (strain IP 31758), this protein is Protein SprT.